Consider the following 317-residue polypeptide: Aspartate carbamoyltransferase catalytic subunit (317 aa).

Residues arginine 65 and threonine 66 each coordinate carbamoyl phosphate. Lysine 93 contributes to the L-aspartate binding site. Residues arginine 115, histidine 145, and glutamine 148 each coordinate carbamoyl phosphate. 2 residues coordinate L-aspartate: arginine 178 and arginine 233. Carbamoyl phosphate is bound by residues glycine 274 and proline 275.

It belongs to the aspartate/ornithine carbamoyltransferase superfamily. ATCase family. In terms of assembly, heterododecamer (2C3:3R2) of six catalytic PyrB chains organized as two trimers (C3), and six regulatory PyrI chains organized as three dimers (R2).

It catalyses the reaction carbamoyl phosphate + L-aspartate = N-carbamoyl-L-aspartate + phosphate + H(+). Its pathway is pyrimidine metabolism; UMP biosynthesis via de novo pathway; (S)-dihydroorotate from bicarbonate: step 2/3. Catalyzes the condensation of carbamoyl phosphate and aspartate to form carbamoyl aspartate and inorganic phosphate, the committed step in the de novo pyrimidine nucleotide biosynthesis pathway. The chain is Aspartate carbamoyltransferase catalytic subunit from Bordetella bronchiseptica (strain ATCC BAA-588 / NCTC 13252 / RB50) (Alcaligenes bronchisepticus).